Here is a 570-residue protein sequence, read N- to C-terminus: Urease subunit alpha (570 aa).

A Urease domain is found at 131–570 (GGFDSHIHFI…LPMAQRYFMY (440 aa)). Ni(2+) contacts are provided by His-136, His-138, and Lys-219. N6-carboxylysine is present on Lys-219. His-221 is a substrate binding site. His-248 and His-274 together coordinate Ni(2+). Catalysis depends on His-322, which acts as the Proton donor. Asp-362 contacts Ni(2+).

This sequence belongs to the metallo-dependent hydrolases superfamily. Urease alpha subunit family. As to quaternary structure, heterotrimer of UreA (gamma), UreB (beta) and UreC (alpha) subunits. Three heterotrimers associate to form the active enzyme. It depends on Ni cation as a cofactor. Carboxylation allows a single lysine to coordinate two nickel ions.

The protein resides in the cytoplasm. It catalyses the reaction urea + 2 H2O + H(+) = hydrogencarbonate + 2 NH4(+). The protein operates within nitrogen metabolism; urea degradation; CO(2) and NH(3) from urea (urease route): step 1/1. This Rhodopseudomonas palustris (strain HaA2) protein is Urease subunit alpha.